A 519-amino-acid polypeptide reads, in one-letter code: Bud site selection protein 22 (519 aa).

The segment at 241–497 (EKTANANQTH…STGEEHPSWI (257 aa)) is disordered. Over residues 244–254 (ANANQTHSNID) the composition is skewed to polar residues. Position 257 is a phosphothreonine (threonine 257). Over residues 267-282 (DSKSNAIGAQTQSNKE) the composition is skewed to polar residues. Acidic residues predominate over residues 321-337 (VTDEEPSEASSDEDDSD). Over residues 338–348 (ERFSDSEENEP) the composition is skewed to basic and acidic residues. Position 367 is a phosphoserine (serine 367). At threonine 371 the chain carries Phosphothreonine. At serine 375 the chain carries Phosphoserine. Basic residues predominate over residues 407-420 (RKNRRGQRARRKIW). The stretch at 426-470 (SQAKHVQRELEKEMEDRKQRQIEYEARVAKREAKAASLEASRSRE) forms a coiled coil. Composition is skewed to basic and acidic residues over residues 431–459 (VQRE…REAK) and 466–497 (SRSR…PSWI).

Belongs to the BUD22 family.

The protein resides in the nucleus. Involved in positioning the proximal bud pole signal. This Saccharomyces cerevisiae (strain ATCC 204508 / S288c) (Baker's yeast) protein is Bud site selection protein 22 (BUD22).